A 419-amino-acid chain; its full sequence is Thymidine phosphorylase (419 aa).

Belongs to the thymidine/pyrimidine-nucleoside phosphorylase family. Homodimer.

It catalyses the reaction thymidine + phosphate = 2-deoxy-alpha-D-ribose 1-phosphate + thymine. Functionally, the enzymes which catalyze the reversible phosphorolysis of pyrimidine nucleosides are involved in the degradation of these compounds and in their utilization as carbon and energy sources, or in the rescue of pyrimidine bases for nucleotide synthesis. The protein is Thymidine phosphorylase (deoA) of Mycoplasmoides pirum (Mycoplasma pirum).